The sequence spans 409 residues: Nucleoprotein (409 aa).

5 disordered regions span residues methionine 1–asparagine 32, asparagine 45–glycine 69, aspartate 122–serine 145, arginine 164–aspartate 194, and valine 238–asparagine 259. The span at proline 15–glycine 31 shows a compositional bias: low complexity. Positions serine 29–leucine 160 are RNA-binding. The region spanning glycine 31–aspartate 156 is the CoV N NTD domain. Over residues aspartate 122–aspartate 138 the composition is skewed to basic and acidic residues. The segment covering arginine 164 to alanine 179 has biased composition (low complexity). Basic and acidic residues-rich tracts occupy residues proline 180–serine 192 and lysine 247–asparagine 259. Phosphoserine; by host occurs at positions 190 and 192. The 113-residue stretch at alanine 219–proline 331 folds into the CoV N CTD domain. Residues arginine 226 to aspartate 333 are dimerization. Residues cysteine 320 and cysteine 323 are joined by a disulfide bond. The segment at glycine 326 to leucine 409 is disordered. A compositionally biased stretch (low complexity) spans arginine 341–glutamine 357. The segment covering glutamine 358 to lysine 367 has biased composition (basic residues). Position 378 is a phosphothreonine; by host (threonine 378). Serine 379 bears the Phosphoserine; by host mark.

The protein belongs to the gammacoronavirus nucleocapsid protein family. In terms of assembly, homooligomer. Both monomeric and oligomeric forms interact with RNA. Interacts with protein M. Interacts with NSP3; this interaction serves to tether the genome to the newly translated replicase-transcriptase complex at a very early stage of infection. In terms of processing, ADP-ribosylated. The ADP-ribosylation is retained in the virion during infection. Post-translationally, phosphorylated on serine and threonine residues.

Its subcellular location is the virion. It is found in the host endoplasmic reticulum-Golgi intermediate compartment. The protein resides in the host Golgi apparatus. Packages the positive strand viral genome RNA into a helical ribonucleocapsid (RNP) and plays a fundamental role during virion assembly through its interactions with the viral genome and membrane protein M. Plays an important role in enhancing the efficiency of subgenomic viral RNA transcription as well as viral replication. This is Nucleoprotein from Avian infectious bronchitis virus (strain Arkansas 99) (IBV).